Reading from the N-terminus, the 523-residue chain is Na(+)/H(+) antiporter NhaB (523 aa).

10 helical membrane-spanning segments follow: residues 28-48, 51-71, 89-109, 137-157, 237-257, 302-322, 347-367, 390-410, 445-465, and 476-496; these read FLII…WLLV, FIFT…GLLA, LSAN…IYFV, MAAF…VISI, FFIR…ATCV, AIIC…VGLI, TESL…AVII, LFYI…VGTV, VATP…LAPL, and MALP…MYLL.

Belongs to the NhaB Na(+)/H(+) (TC 2.A.34) antiporter family.

It localises to the cell inner membrane. It carries out the reaction 2 Na(+)(in) + 3 H(+)(out) = 2 Na(+)(out) + 3 H(+)(in). In terms of biological role, na(+)/H(+) antiporter that extrudes sodium in exchange for external protons. This chain is Na(+)/H(+) antiporter NhaB, found in Tolumonas auensis (strain DSM 9187 / NBRC 110442 / TA 4).